We begin with the raw amino-acid sequence, 155 residues long: Ribosomal RNA large subunit methyltransferase H (155 aa).

Residues Leu-73, Gly-104, and 123-128 (LSPLTL) contribute to the S-adenosyl-L-methionine site.

The protein belongs to the RNA methyltransferase RlmH family. Homodimer.

It is found in the cytoplasm. The catalysed reaction is pseudouridine(1915) in 23S rRNA + S-adenosyl-L-methionine = N(3)-methylpseudouridine(1915) in 23S rRNA + S-adenosyl-L-homocysteine + H(+). In terms of biological role, specifically methylates the pseudouridine at position 1915 (m3Psi1915) in 23S rRNA. This chain is Ribosomal RNA large subunit methyltransferase H, found in Pseudomonas entomophila (strain L48).